The following is a 395-amino-acid chain: THP3 homolog C2A9.11c (395 aa).

The tract at residues 91 to 127 (LLSEEDEVDKKEKRRRRFENGSRSQNNAKSEELKVNP) is disordered. Residues 218 to 384 (DVGEYNQCQT…STDRFEKCMK (167 aa)) enclose the PCI domain.

It belongs to the THP3 family.

It localises to the cytoplasm. It is found in the nucleus. Required for transcription elongation. May also be involved in pre-mRNA splicing. This Schizosaccharomyces pombe (strain 972 / ATCC 24843) (Fission yeast) protein is THP3 homolog C2A9.11c.